We begin with the raw amino-acid sequence, 563 residues long: Germacrene-A synthase (563 aa).

Mg(2+) is bound by residues Asp-316, Asp-320, Asp-461, and Glu-469. Residues 316-320 (DDIYD) carry the DDXXD motif motif.

Belongs to the terpene synthase family. Tpsa subfamily. Mg(2+) serves as cofactor. Expressed in young leaves. Detected in trichomes and cones.

The enzyme catalyses (2E,6E)-farnesyl diphosphate = (+)-(R)-germacrene A + diphosphate. Its pathway is secondary metabolite biosynthesis; terpenoid biosynthesis. Sesquiterpene synthase that catalyzes the formation of germacrene A. Can use farnesyl diphosphate as substrate, but not geranyl diphosphate or geranylgeranyl diphosphate. Beta-elemene, the initially measured product in the assay, is derived nonenzymatically from germacrene A. This Humulus lupulus (European hop) protein is Germacrene-A synthase.